A 1133-amino-acid chain; its full sequence is DNA repair protein rad8 (1133 aa).

Disordered regions lie at residues 1–34 and 392–413; these read MKRKVQKIIDEAPLEENSPPRFFDSDVEADSKPN and PEARDESNSDLTPSSTEDEEDV. S18 bears the Phosphoserine mark. A Helicase ATP-binding domain is found at 516–705; the sequence is PNSMPYHRGG…YSLIKFMRYE (190 aa). Residue 529 to 536 coordinates ATP; that stretch reads DEMGLGKT. The short motif at 656 to 659 is the DEGH box element; sequence DEGH. The RING-type zinc finger occupies 877-923; that stretch reads CPICCNEPIQNPLLLNCKHACCGDCLSEHIQYQKRRNIIPPLCHTCR. Residues 971–1125 enclose the Helicase C-terminal domain; it reads QLRQLTHSSE…EGKQQVQSIE (155 aa).

Belongs to the SNF2/RAD54 helicase family.

The protein localises to the cytoplasm. It is found in the nucleus. Functionally, probable helicase, member of the UBC2/RAD6 epistasis group. Functions with DNA repair protein rad18 in error-free postreplication DNA repair. Involved in the maintenance of wild-type rates of instability of simple repetitive sequences such as poly(GT) repeats. Plays a role in surviving topoisomerase-mediated DNA damage. The protein is DNA repair protein rad8 of Schizosaccharomyces pombe (strain 972 / ATCC 24843) (Fission yeast).